Reading from the N-terminus, the 550-residue chain is MTPADLAELLRGTAAKVLDERGLDVSVLPETLTVERPRNPEHGDYATNVAMQVAKKVGTNPRELAGWLAEALTAAEGIDSADIAGPGFLNIRLAADAQGAIVAKILDEGAAFGSGHTLDGKRINLEFVSANPTGPIHLGGTRWAAVGDALGRILSTQGAAVTREYYFNDHGAQIDRFSRSLIAAAKGEPAPEDGYAGAYIADIAAQVQSQRPDVLELPAGEQQEVFRAIGVDLMFAHIKRTLHEFGVDFDVYFHENSLFESGAVEKAVETLKDSGNLFQEDGAWWLKSTDFGDDKDRVVIKSDGNAAYIAGDIAYFQDKRSRGFDLCIYMLGADHHGYIGRLKAAAAAFGDDPDTVEVLIGQMVNLVRDGVAVKMSKRAGTVITLDDLVEAIGVDASRYAMIRSSVDSSIDIDLELWTSTGNENPVYYVQYAHARLSAIARNAADLGIAVADPDFSLLVSEQEGDLIRTLGEYPRVVTSAANLREPHRIARYLEELAGAYHRFYGACRILPQGDEEVGPLHIARLALCDASRQVLSNGLALLGVSAPEQM.

Positions 130–140 match the 'HIGH' region motif; it reads ANPTGPIHLGG.

This sequence belongs to the class-I aminoacyl-tRNA synthetase family. In terms of assembly, monomer.

The protein localises to the cytoplasm. The catalysed reaction is tRNA(Arg) + L-arginine + ATP = L-arginyl-tRNA(Arg) + AMP + diphosphate. This Rhodococcus jostii (strain RHA1) protein is Arginine--tRNA ligase.